Consider the following 35-residue polypeptide: Manganese peroxidase (35 aa).

Residues 1-11 are compositionally biased toward basic and acidic residues; the sequence is LSLLGHDERVT. The interval 1 to 35 is disordered; the sequence is LSLLGHDERVTPEPFDSVTAQNARGNQADVQSLPR. A compositionally biased stretch (polar residues) spans 18–35; sequence VTAQNARGNQADVQSLPR.

It belongs to the peroxidase family. Requires heme b as cofactor. The cofactor is Ca(2+).

It catalyses the reaction 2 Mn(2+) + H2O2 + 2 H(+) = 2 Mn(3+) + 2 H2O. Its function is as follows. Has manganese peroxidase activity. This Irpex lacteus (Milk-white toothed polypore) protein is Manganese peroxidase.